Reading from the N-terminus, the 467-residue chain is 3-isopropylmalate dehydratase large subunit (467 aa).

Positions 349, 409, and 412 each coordinate [4Fe-4S] cluster. The segment at proline 422–arginine 443 is disordered.

Belongs to the aconitase/IPM isomerase family. LeuC type 1 subfamily. As to quaternary structure, heterodimer of LeuC and LeuD. It depends on [4Fe-4S] cluster as a cofactor.

The catalysed reaction is (2R,3S)-3-isopropylmalate = (2S)-2-isopropylmalate. The protein operates within amino-acid biosynthesis; L-leucine biosynthesis; L-leucine from 3-methyl-2-oxobutanoate: step 2/4. Its function is as follows. Catalyzes the isomerization between 2-isopropylmalate and 3-isopropylmalate, via the formation of 2-isopropylmaleate. The polypeptide is 3-isopropylmalate dehydratase large subunit (Paramagnetospirillum magneticum (strain ATCC 700264 / AMB-1) (Magnetospirillum magneticum)).